We begin with the raw amino-acid sequence, 821 residues long: DNA ligase (821 aa).

Residues 33-37 (DVDYD), 82-83 (SL), and glutamate 113 each bind NAD(+). The active-site N6-AMP-lysine intermediate is the lysine 115. The NAD(+) site is built by arginine 136, glutamate 173, lysine 290, and lysine 314. Residues cysteine 408, cysteine 411, cysteine 426, and cysteine 432 each contribute to the Zn(2+) site. The region spanning 741 to 821 (IVAGPLDGQT…RLLAYLAEHE (81 aa)) is the BRCT domain.

It belongs to the NAD-dependent DNA ligase family. LigA subfamily. Requires Mg(2+) as cofactor. The cofactor is Mn(2+).

It carries out the reaction NAD(+) + (deoxyribonucleotide)n-3'-hydroxyl + 5'-phospho-(deoxyribonucleotide)m = (deoxyribonucleotide)n+m + AMP + beta-nicotinamide D-nucleotide.. DNA ligase that catalyzes the formation of phosphodiester linkages between 5'-phosphoryl and 3'-hydroxyl groups in double-stranded DNA using NAD as a coenzyme and as the energy source for the reaction. It is essential for DNA replication and repair of damaged DNA. This Stenotrophomonas maltophilia (strain K279a) protein is DNA ligase.